Here is a 113-residue protein sequence, read N- to C-terminus: uncharacterized protein (113 aa).

The region spanning 41 to 88 (DWHHHPDSDELFIVLEGELLIDFKDKETAVLKANDSLLIPKGTVHRTR) is the Cupin type-2 domain.

This sequence belongs to the SchB/CurC family.

This is an uncharacterized protein from Bacillus subtilis (strain 168).